A 118-amino-acid chain; its full sequence is Large ribosomal subunit protein bL20 (118 aa).

The protein belongs to the bacterial ribosomal protein bL20 family.

Its function is as follows. Binds directly to 23S ribosomal RNA and is necessary for the in vitro assembly process of the 50S ribosomal subunit. It is not involved in the protein synthesizing functions of that subunit. The sequence is that of Large ribosomal subunit protein bL20 from Francisella tularensis subsp. tularensis (strain FSC 198).